Consider the following 125-residue polypeptide: Translation initiation factor 5A (125 aa).

Position 36 is a hypusine (K36).

The protein belongs to the eIF-5A family.

It localises to the cytoplasm. Functionally, functions by promoting the formation of the first peptide bond. The sequence is that of Translation initiation factor 5A (eIF5A) from Halorubrum lacusprofundi (strain ATCC 49239 / DSM 5036 / JCM 8891 / ACAM 34).